A 501-amino-acid polypeptide reads, in one-letter code: Dipeptide and tripeptide permease A (501 aa).

Residues 1–34 are Cytoplasmic-facing; it reads MSTANNNQPESISMNAFKQPKAFYLIFSIELWER. Residues 35-55 form a helical membrane-spanning segment; that stretch reads FGYYGLQGIMAVYLVKMLGMS. Topologically, residues 56–59 are periplasmic; sequence EADS. The chain crosses the membrane as a helical span at residues 60–80; the sequence is ITLFSSFSALVYGFVAIGGWL. The Cytoplasmic portion of the chain corresponds to 81 to 89; the sequence is GDKVLGAKR. A run of 2 helical transmembrane segments spans residues 90–110 and 111–131; these read VIVL…YSGH and EIFW…LFKA. Residues 132-153 are Periplasmic-facing; the sequence is NPSSLLSTCYSKDDPRLDGAFT. Residues 154 to 174 traverse the membrane as a helical segment; that stretch reads MYYMSINIGSFFSMLATPWLA. Over 175 to 178 the chain is Cytoplasmic; sequence AKYG. The helical transmembrane segment at 179–199 threads the bilayer; that stretch reads WSVAFSLSVVGMLITLVNFWF. Residues 200-220 are Periplasmic-facing; the sequence is CRKWVKNQGSKPDFLPLQFKK. Residues 221–241 form a helical membrane-spanning segment; sequence LLMVLVGIIALITLSNWLLHN. Residues 242–246 are Cytoplasmic-facing; sequence QIIAR. The chain crosses the membrane as a helical span at residues 247–267; sequence WALALVSLGIIFIFTKETLFL. Residues 268–274 are Periplasmic-facing; sequence QGIARRR. A helical membrane pass occupies residues 275 to 295; sequence MIVAFLLMLEAVIFFVLYSQM. Topologically, residues 296–320 are cytoplasmic; it reads PTSLNFFAIHNVEHSIFGIGFEPEQ. The chain crosses the membrane as a helical span at residues 321 to 341; sequence FQALNPFWIMLASPILAAIYN. The Periplasmic portion of the chain corresponds to 342–352; the sequence is KMGDRLPMPHK. The helical transmembrane segment at 353 to 373 threads the bilayer; that stretch reads FAFGMMLCSAAFLVLPWGASF. The Cytoplasmic portion of the chain corresponds to 374-383; the sequence is ANEHGIVSVN. Residues 384 to 404 form a helical membrane-spanning segment; sequence WLILSYALQSIGELMISGLGL. Topologically, residues 405–414 are periplasmic; the sequence is AMVAQLVPQR. A helical membrane pass occupies residues 415 to 435; that stretch reads LMGFIMGSWFLTTAAAALIAG. Residues 436 to 460 are Cytoplasmic-facing; the sequence is KVAALTAVPSDAITDAHASLAIYSH. A helical transmembrane segment spans residues 461–481; that stretch reads VFMQIGIVTAIIAVLMMLTAP. The Periplasmic portion of the chain corresponds to 482–501; sequence KLYRMTLAPSDHNDVKIMTQ.

This sequence belongs to the major facilitator superfamily. Proton-dependent oligopeptide transporter (POT/PTR) (TC 2.A.17) family. DtpA subfamily.

It localises to the cell inner membrane. In terms of biological role, proton-dependent permease that transports di- and tripeptides. This is Dipeptide and tripeptide permease A from Yersinia pestis.